A 751-amino-acid chain; its full sequence is 1,3-beta-galactosyl-N-acetylhexosamine phosphorylase (751 aa).

Asp313 functions as the Proton donor in the catalytic mechanism.

The protein belongs to the glycoside hydrolase 112 family. In terms of assembly, homodimer.

It catalyses the reaction beta-D-galactosyl-(1-&gt;3)-N-acetyl-D-glucosamine + phosphate = alpha-D-galactose 1-phosphate + N-acetyl-D-glucosamine. Its function is as follows. Reversibly phosphorolyzes lacto-N-biose to Gal1-P and N-acetylglucosamine (GlcNAc) and galacto-N-biose to Gal1-P and N-acetylgalactosamine (GalNAc). Involved in the lacto-N-biose I/galacto-N-biose (LNB/GNB) degradation pathway, which is important for host intestinal colonization by bifidobacteria. This Bifidobacterium longum subsp. longum (strain ATCC 15707 / DSM 20219 / JCM 1217 / NCTC 11818 / E194b) protein is 1,3-beta-galactosyl-N-acetylhexosamine phosphorylase (lnpA).